Reading from the N-terminus, the 187-residue chain is GTP cyclohydrolase 1 (187 aa).

Positions 74, 77, and 145 each coordinate Zn(2+).

Belongs to the GTP cyclohydrolase I family. Homomer.

It catalyses the reaction GTP + H2O = 7,8-dihydroneopterin 3'-triphosphate + formate + H(+). The protein operates within cofactor biosynthesis; 7,8-dihydroneopterin triphosphate biosynthesis; 7,8-dihydroneopterin triphosphate from GTP: step 1/1. The polypeptide is GTP cyclohydrolase 1 (Sulfurihydrogenibium sp. (strain YO3AOP1)).